The chain runs to 437 residues: Protein translocase subunit SecY (437 aa).

A run of 10 helical transmembrane segments spans residues 23 to 43 (IVFL…PIPG), 77 to 97 (IFAL…LLTL), 125 to 145 (LILA…IAGI), 154 to 174 (FYFY…LMWL), 183 to 203 (IGNG…PSAI), 217 to 237 (ILLF…VVFM), 271 to 291 (MAGV…ATII), 315 to 335 (YLIL…GLVF), 367 to 387 (IMLR…LIPE), and 395 to 415 (VPFY…IDFI).

This sequence belongs to the SecY/SEC61-alpha family. As to quaternary structure, component of the Sec protein translocase complex. Heterotrimer consisting of SecY, SecE and SecG subunits. The heterotrimers can form oligomers, although 1 heterotrimer is thought to be able to translocate proteins. Interacts with the ribosome. Interacts with SecDF, and other proteins may be involved. Interacts with SecA.

It localises to the cell membrane. The central subunit of the protein translocation channel SecYEG. Consists of two halves formed by TMs 1-5 and 6-10. These two domains form a lateral gate at the front which open onto the bilayer between TMs 2 and 7, and are clamped together by SecE at the back. The channel is closed by both a pore ring composed of hydrophobic SecY resides and a short helix (helix 2A) on the extracellular side of the membrane which forms a plug. The plug probably moves laterally to allow the channel to open. The ring and the pore may move independently. The chain is Protein translocase subunit SecY from Buchnera aphidicola subsp. Acyrthosiphon pisum (strain APS) (Acyrthosiphon pisum symbiotic bacterium).